The primary structure comprises 243 residues: Phosphoadenosine 5'-phosphosulfate reductase (243 aa).

The active-site Nucleophile; cysteine thiosulfonate intermediate is the C239.

It belongs to the PAPS reductase family. CysH subfamily.

Its subcellular location is the cytoplasm. The catalysed reaction is [thioredoxin]-disulfide + sulfite + adenosine 3',5'-bisphosphate + 2 H(+) = [thioredoxin]-dithiol + 3'-phosphoadenylyl sulfate. The protein operates within sulfur metabolism; hydrogen sulfide biosynthesis; sulfite from sulfate: step 3/3. Catalyzes the formation of sulfite from phosphoadenosine 5'-phosphosulfate (PAPS) using thioredoxin as an electron donor. The chain is Phosphoadenosine 5'-phosphosulfate reductase from Proteus mirabilis (strain HI4320).